We begin with the raw amino-acid sequence, 628 residues long: Propionate--CoA ligase (628 aa).

This sequence belongs to the ATP-dependent AMP-binding enzyme family.

The enzyme catalyses propanoate + ATP + CoA = propanoyl-CoA + AMP + diphosphate. It participates in organic acid metabolism; propanoate degradation. In terms of biological role, catalyzes the synthesis of propionyl-CoA from propionate and CoA. Also converts acetate to acetyl-CoA but with a lower specific activity. The polypeptide is Propionate--CoA ligase (prpE) (Escherichia coli (strain K12)).